A 207-amino-acid chain; its full sequence is ATP-dependent dethiobiotin synthetase BioD (207 aa).

13–18 provides a ligand contact to ATP; the sequence is EVGKTV. A Mg(2+)-binding site is contributed by T17. K33 is an active-site residue. Residues D44 and 100–103 contribute to the ATP site; that span reads EGAG. The Mg(2+) site is built by D44 and E100.

It belongs to the dethiobiotin synthetase family. Homodimer. Mg(2+) is required as a cofactor.

Its subcellular location is the cytoplasm. It catalyses the reaction (7R,8S)-7,8-diammoniononanoate + CO2 + ATP = (4R,5S)-dethiobiotin + ADP + phosphate + 3 H(+). The protein operates within cofactor biosynthesis; biotin biosynthesis; biotin from 7,8-diaminononanoate: step 1/2. Catalyzes a mechanistically unusual reaction, the ATP-dependent insertion of CO2 between the N7 and N8 nitrogen atoms of 7,8-diaminopelargonic acid (DAPA, also called 7,8-diammoniononanoate) to form a ureido ring. This is ATP-dependent dethiobiotin synthetase BioD from Christiangramia forsetii (strain DSM 17595 / CGMCC 1.15422 / KT0803) (Gramella forsetii).